We begin with the raw amino-acid sequence, 811 residues long: Probable inorganic carbon transporter subunit DabA (811 aa).

Zn(2+) is bound by residues C336, D338, H498, and C513.

This sequence belongs to the inorganic carbon transporter (TC 9.A.2) DabA family. As to quaternary structure, forms a complex with DabB. Requires Zn(2+) as cofactor.

It is found in the cell inner membrane. Part of an energy-coupled inorganic carbon pump. The polypeptide is Probable inorganic carbon transporter subunit DabA (Azorhizobium caulinodans (strain ATCC 43989 / DSM 5975 / JCM 20966 / LMG 6465 / NBRC 14845 / NCIMB 13405 / ORS 571)).